The sequence spans 515 residues: Bifunctional dihydrofolate reductase-thymidylate synthase (515 aa).

One can recognise a DHFR domain in the interval 26-228; that stretch reads AFSIVVAADQ…LSYEIMKYVP (203 aa). Residue Val-30 participates in substrate binding. Residues Ala-32, 38–44, 81–83, and 101–104 each bind NADP(+); these read GIGDGET, RKT, and LSCR. Substrate-binding residues include Ile-154, Tyr-160, and Thr-178. Position 155–162 (155–162) interacts with NADP(+); it reads GGARVYTE. The tract at residues 233 to 515 is thymidylate synthase; sequence ERQYLELIDR…YPPIKMEMAV (283 aa). A dUMP-binding site is contributed by Arg-253. Cys-395 is an active-site residue. Residues His-396, 416–420, Asn-428, and 458–460 each bind dUMP; these read QRCCD and HVY.

This sequence in the N-terminal section; belongs to the dihydrofolate reductase family. It in the C-terminal section; belongs to the thymidylate synthase family.

The enzyme catalyses (6S)-5,6,7,8-tetrahydrofolate + NADP(+) = 7,8-dihydrofolate + NADPH + H(+). It carries out the reaction dUMP + (6R)-5,10-methylene-5,6,7,8-tetrahydrofolate = 7,8-dihydrofolate + dTMP. Its pathway is cofactor biosynthesis; tetrahydrofolate biosynthesis; 5,6,7,8-tetrahydrofolate from 7,8-dihydrofolate: step 1/1. Its function is as follows. Bifunctional enzyme. Involved in de novo dTMP biosynthesis. Key enzyme in folate metabolism. Catalyzes an essential reaction for de novo glycine and purine synthesis, DNA precursor synthesis, and for the conversion of dUMP to dTMP. The chain is Bifunctional dihydrofolate reductase-thymidylate synthase from Crithidia fasciculata.